A 275-amino-acid polypeptide reads, in one-letter code: Large ribosomal subunit protein uL2 (275 aa).

Disordered stretches follow at residues 28–49 (APHA…HGRI) and 224–246 (AMNP…NPHP).

It belongs to the universal ribosomal protein uL2 family. In terms of assembly, part of the 50S ribosomal subunit. Forms a bridge to the 30S subunit in the 70S ribosome.

One of the primary rRNA binding proteins. Required for association of the 30S and 50S subunits to form the 70S ribosome, for tRNA binding and peptide bond formation. It has been suggested to have peptidyltransferase activity; this is somewhat controversial. Makes several contacts with the 16S rRNA in the 70S ribosome. This is Large ribosomal subunit protein uL2 from Stenotrophomonas maltophilia (strain R551-3).